We begin with the raw amino-acid sequence, 522 residues long: Sulfite reductase [NADPH] flavoprotein alpha-component (522 aa).

Positions 60-198 constitute a Flavodoxin-like domain; sequence ITILFGSQTG…DTERWSSDAL (139 aa). The disordered stretch occupies residues 217–242; it reads TLRSHQDLRSHQEQSRNRARPYDKDN. Positions 220–242 are enriched in basic and acidic residues; the sequence is SHQDLRSHQEQSRNRARPYDKDN. Residues 241 to 399 form the FAD-binding FR-type domain; sequence DNPYTATLLE…VAPYRAFLQQ (159 aa).

As to quaternary structure, alpha(8)-beta(8). The alpha component is a flavoprotein, the beta component is a hemoprotein. FAD is required as a cofactor. It depends on FMN as a cofactor.

The catalysed reaction is hydrogen sulfide + 3 NADP(+) + 3 H2O = sulfite + 3 NADPH + 4 H(+). Functionally, catalyzes the 6-electron reduction of sulfite to sulfide. This is one of several activities required for the biosynthesis of L-cysteine from sulfate. The flavo-protein component catalyzes the electron flow from NADPH -&gt; FAD -&gt; FMN to the hemoprotein component. This is Sulfite reductase [NADPH] flavoprotein alpha-component (cysJ) from Thiocapsa roseopersicina.